The sequence spans 316 residues: Serine protease 45 (316 aa).

The N-terminal stretch at 1-38 (MAASLSRLSAGLAASRPLGLSRSFLLLVLLLLNSGYKG) is a signal peptide. The 242-residue stretch at 49-290 (WWPKNLDLSR…YSRWIKKQIS (242 aa)) folds into the Peptidase S1 domain. C74 and C90 are disulfide-bonded. Residue H89 is the Charge relay system of the active site. Residue N110 is glycosylated (N-linked (GlcNAc...) asparagine). D137 (charge relay system) is an active-site residue. 2 N-linked (GlcNAc...) asparagine glycosylation sites follow: N162 and N186. 3 disulfide bridges follow: C171-C248, C206-C229, and C238-C266. The active-site Charge relay system is the S242.

It belongs to the peptidase S1 family.

Its subcellular location is the secreted. This is Serine protease 45 (PRSS45) from Bos taurus (Bovine).